A 331-amino-acid chain; its full sequence is Ribosomal RNA small subunit methyltransferase H (331 aa).

Residues 38 to 40, aspartate 56, phenylalanine 83, aspartate 100, and glutamine 107 contribute to the S-adenosyl-L-methionine site; that span reads GGY. The tract at residues 287–331 is disordered; it reads DEAELAENPRARSARLRVGVRTDAPAGKVDPQALGTPLIPKKGRR.

This sequence belongs to the methyltransferase superfamily. RsmH family.

Its subcellular location is the cytoplasm. It carries out the reaction cytidine(1402) in 16S rRNA + S-adenosyl-L-methionine = N(4)-methylcytidine(1402) in 16S rRNA + S-adenosyl-L-homocysteine + H(+). Its function is as follows. Specifically methylates the N4 position of cytidine in position 1402 (C1402) of 16S rRNA. In Cereibacter sphaeroides (strain KD131 / KCTC 12085) (Rhodobacter sphaeroides), this protein is Ribosomal RNA small subunit methyltransferase H.